Consider the following 513-residue polypeptide: Putative ATP-dependent RNA helicase QP509L (513 aa).

Residues 110–262 (KKLLSPYGRF…KIIIHHLGQP (153 aa)) form the Helicase ATP-binding domain. An ATP-binding site is contributed by 123 to 130 (LNTGLGKT). Positions 215–218 (DEAH) match the DEAH box motif.

Belongs to the DEAD box helicase family. DEAH subfamily.

The enzyme catalyses ATP + H2O = ADP + phosphate + H(+). This African swine fever virus (isolate Tick/South Africa/Pretoriuskop Pr4/1996) (ASFV) protein is Putative ATP-dependent RNA helicase QP509L.